Consider the following 200-residue polypeptide: Small ribosomal subunit protein eS8B (200 aa).

Residues 1-41 form a disordered region; sequence MGITRDSRHKRSATGAKRAQYRKKRKFELGRQPSNTRIGPK. 2 positions are modified to phosphoserine: S62 and S99. Positions 124 to 145 are disordered; sequence KGKKATATPTPKSKHVQRKHSA. The segment covering 135 to 145 has biased composition (basic residues); the sequence is KSKHVQRKHSA. A phosphoserine mark is found at S150, S154, and S171.

This sequence belongs to the eukaryotic ribosomal protein eS8 family. Component of the small ribosomal subunit (SSU). Mature yeast ribosomes consist of a small (40S) and a large (60S) subunit. The 40S small subunit contains 1 molecule of ribosomal RNA (18S rRNA) and at least 33 different proteins. The large 60S subunit contains 3 rRNA molecules (25S, 5.8S and 5S rRNA) and at least 46 different proteins.

Its subcellular location is the cytoplasm. Its function is as follows. Component of the ribosome, a large ribonucleoprotein complex responsible for the synthesis of proteins in the cell. The small ribosomal subunit (SSU) binds messenger RNAs (mRNAs) and translates the encoded message by selecting cognate aminoacyl-transfer RNA (tRNA) molecules. The large subunit (LSU) contains the ribosomal catalytic site termed the peptidyl transferase center (PTC), which catalyzes the formation of peptide bonds, thereby polymerizing the amino acids delivered by tRNAs into a polypeptide chain. The nascent polypeptides leave the ribosome through a tunnel in the LSU and interact with protein factors that function in enzymatic processing, targeting, and the membrane insertion of nascent chains at the exit of the ribosomal tunnel. The polypeptide is Small ribosomal subunit protein eS8B (rps802) (Schizosaccharomyces pombe (strain 972 / ATCC 24843) (Fission yeast)).